The primary structure comprises 211 residues: N-(5'-phosphoribosyl)anthranilate isomerase (211 aa).

It belongs to the TrpF family.

The catalysed reaction is N-(5-phospho-beta-D-ribosyl)anthranilate = 1-(2-carboxyphenylamino)-1-deoxy-D-ribulose 5-phosphate. It functions in the pathway amino-acid biosynthesis; L-tryptophan biosynthesis; L-tryptophan from chorismate: step 3/5. This chain is N-(5'-phosphoribosyl)anthranilate isomerase, found in Pseudomonas paraeruginosa (strain DSM 24068 / PA7) (Pseudomonas aeruginosa (strain PA7)).